The following is a 348-amino-acid chain: MKLTSEKLPKNPFYASISQYAAKNQKSFQWEKEKTDHYSHANLVDKALQLLKKRILKGDTLAYFLRGQLYFEEGWYEEALEQFEEIEEKDHQATYQLGVMYYDGLGTILNSEKGVDYMKKILDSPCPKARHLKFAAAYNLGRAYYEGKGVKRSNEEAERLWLFAADNGNPKASVKAQSMLGLYYSTKEPKELEKAFYWHSEACGNGNLESQGALGLMYLYGQGIRQDTEAALHCLREAAERGNVYAQGNLVEYYYKMKFFTKCVAFSKRIADYDEVHDIPMIAQVTDCLPEFISRGMAMASFYHARCLQLGLGITRDEATAKHYYSKACRLNPALADELRSLLIRQRI.

A TPR repeat occupies 60-93 (TLAYFLRGQLYFEEGWYEEALEQFEEIEEKDHQA). Sel1-like repeat units lie at residues 94–126 (TYQL…DSPC), 134–169 (FAAA…DNGN), 174–207 (VKAQ…GNGN), 208–243 (LESQ…ERGN), 244–278 (VYAQ…EVHD), and 298–333 (AMAS…RLNP).

As to quaternary structure, interacts with LRP2.

The protein localises to the cytoplasm. Functionally, may act as an adapter that regulates LRP2 function. The polypeptide is LRP2-binding protein (LRP2BP) (Macaca fascicularis (Crab-eating macaque)).